The chain runs to 207 residues: Large ribosomal subunit protein bL25 (207 aa).

The interval 1–20 (MANHQIKAQRRKDEGKGASR) is disordered.

This sequence belongs to the bacterial ribosomal protein bL25 family. CTC subfamily. As to quaternary structure, part of the 50S ribosomal subunit; part of the 5S rRNA/L5/L18/L25 subcomplex. Contacts the 5S rRNA. Binds to the 5S rRNA independently of L5 and L18.

This is one of the proteins that binds to the 5S RNA in the ribosome where it forms part of the central protuberance. The sequence is that of Large ribosomal subunit protein bL25 from Xylella fastidiosa (strain M23).